We begin with the raw amino-acid sequence, 449 residues long: Phosphoglucosamine mutase (449 aa).

The active-site Phosphoserine intermediate is the S100. 4 residues coordinate Mg(2+): S100, D241, D243, and D245. A Phosphoserine modification is found at S100.

It belongs to the phosphohexose mutase family. The cofactor is Mg(2+). Activated by phosphorylation.

The catalysed reaction is alpha-D-glucosamine 1-phosphate = D-glucosamine 6-phosphate. Functionally, catalyzes the conversion of glucosamine-6-phosphate to glucosamine-1-phosphate. The chain is Phosphoglucosamine mutase from Clostridium botulinum (strain Loch Maree / Type A3).